We begin with the raw amino-acid sequence, 449 residues long: Tubulin alpha-1C chain (449 aa).

An MREC motif motif is present at residues 1 to 4 (MREC). Q11 is a binding site for GTP. K40 carries the post-translational modification N6-acetyllysine. GTP-binding residues include E71, S140, G144, T145, T179, N206, and N228. Position 71 (E71) interacts with Mg(2+). E254 is a catalytic residue. Residue Y282 is modified to 3'-nitrotyrosine. The interval 429 to 449 (EKDYEEVGADSAEGDDEGDEY) is disordered. Positions 431–449 (DYEEVGADSAEGDDEGDEY) are enriched in acidic residues. Y432 carries the post-translational modification Phosphotyrosine. Phosphoserine is present on S439. The residue at position 449 (Y449) is a 3'-nitrotyrosine.

It belongs to the tubulin family. As to quaternary structure, dimer of alpha and beta chains. A typical microtubule is a hollow water-filled tube with an outer diameter of 25 nm and an inner diameter of 15 nM. Alpha-beta heterodimers associate head-to-tail to form protofilaments running lengthwise along the microtubule wall with the beta-tubulin subunit facing the microtubule plus end conferring a structural polarity. Microtubules usually have 13 protofilaments but different protofilament numbers can be found in some organisms and specialized cells. Requires Mg(2+) as cofactor. Some glutamate residues at the C-terminus are polyglycylated, resulting in polyglycine chains on the gamma-carboxyl group. Glycylation is mainly limited to tubulin incorporated into axonemes (cilia and flagella) whereas glutamylation is prevalent in neuronal cells, centrioles, axonemes, and the mitotic spindle. Both modifications can coexist on the same protein on adjacent residues, and lowering polyglycylation levels increases polyglutamylation, and reciprocally. Cilia and flagella glycylation is required for their stability and maintenance. Flagella glycylation controls sperm motility. Post-translationally, some glutamate residues at the C-terminus are polyglutamylated, resulting in polyglutamate chains on the gamma-carboxyl group. Polyglutamylation plays a key role in microtubule severing by spastin (SPAST). SPAST preferentially recognizes and acts on microtubules decorated with short polyglutamate tails: severing activity by SPAST increases as the number of glutamates per tubulin rises from one to eight, but decreases beyond this glutamylation threshold. Glutamylation is also involved in cilia motility. In terms of processing, acetylation of alpha chains at Lys-40 is located inside the microtubule lumen. This modification has been correlated with increased microtubule stability, intracellular transport and ciliary assembly. Methylation of alpha chains at Lys-40 is found in mitotic microtubules and is required for normal mitosis and cytokinesis contributing to genomic stability. Post-translationally, nitration of Tyr-449 is irreversible and interferes with normal dynein intracellular distribution. In terms of processing, undergoes a tyrosination/detyrosination cycle, the cyclic removal and re-addition of a C-terminal tyrosine residue by the enzymes tubulin tyrosine carboxypeptidase (MATCAP1, VASH1 or VASH2) and tubulin tyrosine ligase (TTL), respectively. Tyrosination promotes microtubule interaction with CAP-Gly domain-containing proteins such as CLIP1, CLIP2 and DCTN1. Tyrosination regulates the initiation of dynein-dynactin motility via interaction with DCTN1, which brings the dynein-dynactin complex into contact with microtubules. In neurons, tyrosinated tubulins mediate the initiation of retrograde vesicle transport. Post-translationally, detyrosination is involved in metaphase plate congression by guiding chromosomes during mitosis: detyrosination promotes interaction with CENPE, promoting pole-proximal transport of chromosomes toward the equator. Detyrosination increases microtubules-dependent mechanotransduction in dystrophic cardiac and skeletal muscle. In cardiomyocytes, detyrosinated microtubules are required to resist to contractile compression during contraction: detyrosination promotes association with desmin (DES) at force-generating sarcomeres, leading to buckled microtubules and mechanical resistance to contraction.

Its subcellular location is the cytoplasm. It localises to the cytoskeleton. It carries out the reaction GTP + H2O = GDP + phosphate + H(+). Tubulin is the major constituent of microtubules, a cylinder consisting of laterally associated linear protofilaments composed of alpha- and beta-tubulin heterodimers. Microtubules grow by the addition of GTP-tubulin dimers to the microtubule end, where a stabilizing cap forms. Below the cap, tubulin dimers are in GDP-bound state, owing to GTPase activity of alpha-tubulin. This is Tubulin alpha-1C chain (TUBA1C) from Bos taurus (Bovine).